The chain runs to 696 residues: ATP-dependent zinc metalloprotease FtsH (696 aa).

Topologically, residues 1 to 29 (MWLQVTNCSTLHSSLSYCGANTLSDMAKN) are cytoplasmic. A helical transmembrane segment spans residues 30-50 (LILWLVIAVVLMSVFQSFGPS). The Periplasmic portion of the chain corresponds to 51–124 (DSAGRQVDYT…LGTPPEEPSL (74 aa)). Residues 125–145 (LASIFISWFPMLLLIGVWVFF) form a helical membrane-spanning segment. Over 146-696 (MRQMQGGGGG…APKEDDKPQA (551 aa)) the chain is Cytoplasmic. 219 to 226 (GPPGTGKT) is an ATP binding site. Zn(2+) is bound at residue His441. Glu442 is an active-site residue. The Zn(2+) site is built by His445 and Asp519. Positions 627-696 (RAPKGWGDTD…APKEDDKPQA (70 aa)) are disordered. Positions 650-696 (PEAKTESAPEAKAEANVETEEKPVAADSEELKPKAEQAPKEDDKPQA) are enriched in basic and acidic residues.

The protein in the central section; belongs to the AAA ATPase family. In the C-terminal section; belongs to the peptidase M41 family. As to quaternary structure, homohexamer. It depends on Zn(2+) as a cofactor.

It is found in the cell inner membrane. Acts as a processive, ATP-dependent zinc metallopeptidase for both cytoplasmic and membrane proteins. Plays a role in the quality control of integral membrane proteins. The sequence is that of ATP-dependent zinc metalloprotease FtsH from Photobacterium profundum (strain SS9).